The chain runs to 300 residues: UDP-N-acetylenolpyruvoylglucosamine reductase (300 aa).

The FAD-binding PCMH-type domain maps to 30–194; the sequence is KVGGPADFFA…LAAVFSLAAG (165 aa). R174 is a catalytic residue. S223 serves as the catalytic Proton donor. Residue E293 is part of the active site.

Belongs to the MurB family. Requires FAD as cofactor.

The protein localises to the cytoplasm. The catalysed reaction is UDP-N-acetyl-alpha-D-muramate + NADP(+) = UDP-N-acetyl-3-O-(1-carboxyvinyl)-alpha-D-glucosamine + NADPH + H(+). It functions in the pathway cell wall biogenesis; peptidoglycan biosynthesis. Cell wall formation. In Geotalea uraniireducens (strain Rf4) (Geobacter uraniireducens), this protein is UDP-N-acetylenolpyruvoylglucosamine reductase.